We begin with the raw amino-acid sequence, 205 residues long: High frequency lysogenization protein HflD homolog (205 aa).

The protein belongs to the HflD family.

The protein localises to the cytoplasm. The protein resides in the cell inner membrane. The chain is High frequency lysogenization protein HflD homolog from Haemophilus influenzae (strain PittEE).